Consider the following 436-residue polypeptide: Adenylosuccinate synthetase (436 aa).

Residues 12–18 (GDEGKGK) and 40–42 (GHT) contribute to the GTP site. D13 functions as the Proton acceptor in the catalytic mechanism. Residues D13 and G40 each contribute to the Mg(2+) site. IMP contacts are provided by residues 13 to 16 (DEGK), 38 to 41 (NAGH), T128, R142, Q223, T238, and R302. The Proton donor role is filled by H41. 298-304 (TTTGRRR) is a substrate binding site. GTP is bound by residues R304, 330 to 332 (KLD), and 412 to 414 (SLG).

Belongs to the adenylosuccinate synthetase family. Homodimer. Mg(2+) is required as a cofactor.

The protein localises to the cytoplasm. It catalyses the reaction IMP + L-aspartate + GTP = N(6)-(1,2-dicarboxyethyl)-AMP + GDP + phosphate + 2 H(+). Its pathway is purine metabolism; AMP biosynthesis via de novo pathway; AMP from IMP: step 1/2. Functionally, plays an important role in the de novo pathway of purine nucleotide biosynthesis. Catalyzes the first committed step in the biosynthesis of AMP from IMP. In Prochlorococcus marinus subsp. pastoris (strain CCMP1986 / NIES-2087 / MED4), this protein is Adenylosuccinate synthetase.